The sequence spans 326 residues: Tumor necrosis factor soluble receptor (326 aa).

The signal sequence occupies residues 1-16 (MFRLTLLLAYVACVYG). TNFR-Cys repeat units lie at residues 27 to 62 (KCRG…TVCS), 63 to 104 (PCKN…DRVC), 105 to 147 (DCSA…VLCT), and 148 to 186 (KCPR…TSCT). 10 disulfide bridges follow: cysteine 28/cysteine 39, cysteine 40/cysteine 53, cysteine 43/cysteine 61, cysteine 64/cysteine 79, cysteine 82/cysteine 96, cysteine 86/cysteine 104, cysteine 106/cysteine 120, cysteine 123/cysteine 146, cysteine 129/cysteine 149, and cysteine 164/cysteine 185. The N-linked (GlcNAc...) asparagine; by host glycan is linked to asparagine 66. 3 N-linked (GlcNAc...) asparagine; by host glycosylation sites follow: asparagine 181, asparagine 205, and asparagine 238.

In terms of biological role, binds to TNF-alpha and beta. Probably prevents TNF to reach cellular target and thereby deampening the potential antiviral effects of the cytokine. This is Tumor necrosis factor soluble receptor from Oryctolagus cuniculus (Rabbit).